Here is a 199-residue protein sequence, read N- to C-terminus: Octanoyltransferase (199 aa).

In terms of domain architecture, BPL/LPL catalytic spans 27–199 (SNSCDELWLL…FVQYFLTQFK (173 aa)). Substrate is bound by residues 66–73 (RGGQVTYH), 133–135 (SIG), and 146–148 (GIA). Cys-164 functions as the Acyl-thioester intermediate in the catalytic mechanism.

This sequence belongs to the LipB family.

It localises to the cytoplasm. It carries out the reaction octanoyl-[ACP] + L-lysyl-[protein] = N(6)-octanoyl-L-lysyl-[protein] + holo-[ACP] + H(+). It participates in protein modification; protein lipoylation via endogenous pathway; protein N(6)-(lipoyl)lysine from octanoyl-[acyl-carrier-protein]: step 1/2. Catalyzes the transfer of endogenously produced octanoic acid from octanoyl-acyl-carrier-protein onto the lipoyl domains of lipoate-dependent enzymes. Lipoyl-ACP can also act as a substrate although octanoyl-ACP is likely to be the physiological substrate. The protein is Octanoyltransferase of Legionella pneumophila (strain Paris).